Here is a 357-residue protein sequence, read N- to C-terminus: GTPase Obg (357 aa).

Residues 1–159 (MKFVDEAFID…RNLKLELKVL (159 aa)) enclose the Obg domain. Residues 160–334 (ADVGLLGMPN…LIQAIYQHVR (175 aa)) enclose the OBG-type G domain. GTP is bound by residues 166–173 (GMPNAGKS), 191–195 (FTTLH), 213–216 (DIPG), 284–287 (NKLD), and 315–317 (SAL). Mg(2+) contacts are provided by serine 173 and threonine 193.

The protein belongs to the TRAFAC class OBG-HflX-like GTPase superfamily. OBG GTPase family. As to quaternary structure, monomer. The cofactor is Mg(2+).

Its subcellular location is the cytoplasm. Functionally, an essential GTPase which binds GTP, GDP and possibly (p)ppGpp with moderate affinity, with high nucleotide exchange rates and a fairly low GTP hydrolysis rate. Plays a role in control of the cell cycle, stress response, ribosome biogenesis and in those bacteria that undergo differentiation, in morphogenesis control. This is GTPase Obg from Paracidovorax citrulli (strain AAC00-1) (Acidovorax citrulli).